The sequence spans 481 residues: Putative cytochrome P450 520B1 (481 aa).

Cysteine 427 contacts heme.

This sequence belongs to the cytochrome P450 family. Heme is required as a cofactor.

The chain is Putative cytochrome P450 520B1 (cyp520B1) from Dictyostelium discoideum (Social amoeba).